Consider the following 184-residue polypeptide: ATP synthase subunit delta (184 aa).

The protein belongs to the ATPase delta chain family. F-type ATPases have 2 components, F(1) - the catalytic core - and F(0) - the membrane proton channel. F(1) has five subunits: alpha(3), beta(3), gamma(1), delta(1), epsilon(1). F(0) has three main subunits: a(1), b(2) and c(10-14). The alpha and beta chains form an alternating ring which encloses part of the gamma chain. F(1) is attached to F(0) by a central stalk formed by the gamma and epsilon chains, while a peripheral stalk is formed by the delta and b chains.

Its subcellular location is the cell membrane. Its function is as follows. F(1)F(0) ATP synthase produces ATP from ADP in the presence of a proton or sodium gradient. F-type ATPases consist of two structural domains, F(1) containing the extramembraneous catalytic core and F(0) containing the membrane proton channel, linked together by a central stalk and a peripheral stalk. During catalysis, ATP synthesis in the catalytic domain of F(1) is coupled via a rotary mechanism of the central stalk subunits to proton translocation. Functionally, this protein is part of the stalk that links CF(0) to CF(1). It either transmits conformational changes from CF(0) to CF(1) or is implicated in proton conduction. This chain is ATP synthase subunit delta, found in Bacillus licheniformis (strain ATCC 14580 / DSM 13 / JCM 2505 / CCUG 7422 / NBRC 12200 / NCIMB 9375 / NCTC 10341 / NRRL NRS-1264 / Gibson 46).